A 923-amino-acid chain; its full sequence is MKFGKKLRFECVSEWHNKYISYGKLKKYLRYLYRSDLKQIGEAEEAHLLINGFPSLSDSQEQFKQLSNSSSPIFNDGSCLENSLDSSIGSNIIQEQSQHQQQAQQQPPQQAQQQPPQQAQQQAQQQAPQAQQQAQQQAQQPEQQQQQDLKESFNDITGYSIDQYEDTSNLDEKTPLISILDQSRPTTTTTTTTTTMNTSAGSGIFKNKKPKQIPTISIPVFSQSERERLFLSKIDEELRKINEFFSNKEKDIILHYNKLTEHCSLILKDRNPSPKVLKNIQKAFGELYKGLTMLENYVNLNYQGFEKILKKYDRLAPMNSSIKLDQMERIKLEKFHSSKSWRNMKEDVELLYCKIFKLDKISIAKKKLAPFSESQSADYHMLKLGFAIGLSIGILAFVIILFTNKSLNQHPDWTRFVSTIPIFRAVGIPILAVWLWGVNVYIWDNARVNYILIFGLDPRTSIDHRRIWKTASFLTAIWLTMFLLFCGTVTGNFALGDVPAQVYPLVLVIFFLSVVFFPFRFFHRKSRTLLFITLGNVIITPFGSTKFRALFLGDLLTSMVKTIFDFEYTACYFFTGDWMINDSTRCNQVNSIALPILSGLPLLWRFMQCILRYRETNNKIHLGNSTKYAVGFSVVLFSALNGNYQAYEPWSASRILWCVCFVLSTLYMYCWDVVVDWGFMWLGKPRPLLRHQLMYKRHMWSYYYVLFSNLILRFAWTLTITRIPFELPINSELFNTITASIELVRRFTWSIFRVENEHICNSIQYHAFDFSEAPWKNEVPKVESPKSLLPLSSSYPYRQDNFNNNNNNNNNNNNNNNNNNNNNNNNNNNNNNNNNNNNNNNNNNNNTNNNINNINNINNNNNNSPSGSNSSINNSFHLGSSSYSYDNQYSIWKKSSKQYYSTSLIDSIKKKFFNNNNSNNNKK.

Residues 1-326 (MKFGKKLRFE…PMNSSIKLDQ (326 aa)) enclose the SPX domain. Low complexity-rich tracts occupy residues 94–147 (QEQS…QQQQ) and 186–195 (TTTTTTTTTT). Disordered regions lie at residues 94–150 (QEQS…QDLK) and 185–208 (PTTT…FKNK). The next 9 helical transmembrane spans lie at 382-402 (LKLG…IILF), 416-436 (FVST…VWLW), 471-491 (ASFL…TVTG), 499-519 (PAQV…FFPF), 529-551 (LLFI…RALF), 591-611 (SIAL…QCIL), 620-640 (IHLG…FSAL), 655-675 (ILWC…DVVV), and 700-720 (WSYY…TLTI). Residues 585–785 (RCNQVNSIAL…KNEVPKVESP (201 aa)) enclose the EXS domain. The disordered stretch occupies residues 793-871 (SSYPYRQDNF…NNSPSGSNSS (79 aa)).

It belongs to the SYG1 (TC 2.A.94) family.

It localises to the membrane. This Dictyostelium discoideum (Social amoeba) protein is SPX and EXS domain-containing protein 1.